Consider the following 708-residue polypeptide: FACT complex subunit SSRP1 (708 aa).

Residue Ala2 is modified to N-acetylalanine. Lys90 is covalently cross-linked (Glycyl lysine isopeptide (Lys-Gly) (interchain with G-Cter in SUMO2)). The residue at position 170 (Thr170) is a Phosphothreonine. Lys233 bears the N6-acetyllysine mark. Residues Lys296 and Lys364 each participate in a glycyl lysine isopeptide (Lys-Gly) (interchain with G-Cter in SUMO2) cross-link. An N6-acetyllysine modification is found at Lys413. Tyr441 carries the phosphotyrosine modification. Ser444 is subject to Phosphoserine. Tyr452 carries the phosphotyrosine modification. The interval 458 to 708 is disordered; that stretch reads EEGKIREENA…SEDSASGSDE (251 aa). Residues 470 to 496 are compositionally biased toward acidic residues; sequence SSDDSGEETDESFNPGEEEEDVAEEFD. Phosphoserine is present on Ser471. Residues 497-507 are compositionally biased toward low complexity; that stretch reads SNASASSSSNE. Ser510 is modified (phosphoserine; by CK2). Composition is skewed to basic and acidic residues over residues 512 to 546 and 577 to 624; these read REEKKREQLKRAKMAKDRKSRRKSSEAKKGKDPNA and LSKK…SSKR. At Lys542 the chain carries N6-acetyllysine. Residues 547-615 constitute a DNA-binding region (HMG box); the sequence is PKRPMSAYML…EYEKAMKEYE (69 aa). Basic residues predominate over residues 625 to 634; sequence DKSKKKKKVK. Low complexity predominate over residues 643 to 659; it reads PSRGSSSKSSSRQLSDS. Ser657 is subject to Phosphoserine; by CK2. Ser659, Ser667, Ser668, Ser671, Ser672, and Ser673 each carry phosphoserine. Phosphoserine; by CK2 is present on Ser688. Polar residues predominate over residues 695–708; sequence TPPSSEDSASGSDE.

Belongs to the SSRP1 family. Interacts with MYOG (via C-terminal region). Component of the FACT complex, a stable heterodimer of SSRP1 and SUPT16H. Also a component of a CK2-SPT16-SSRP1 complex which forms following UV irradiation, composed of SSRP1, SUPT16H, CSNK2A1, CSNK2A2 and CSNK2B. Binds to histone H3-H4 tetramers, but not to intact nucleosomes. Identified in a centromere complex containing histones H2A, H2B and H4, and at least CENPA, CENPB, CENPC, CENPT, CENPN, HJURP, SUPT16H, SSRP1 and RSF1. Interacts with isoform gamma of TP63. Interacts with FYTTD1/UIF. Interacts with SRF. Interacts with NEK9. Post-translationally, phosphorylated by CK2 following UV but not gamma irradiation. Phosphorylation inhibits its DNA-binding activity. Ubiquitinated. Polyubiquitinated following caspase cleavage resulting in degradation of the N-terminal ubiquitinated part of the cleaved protein. In terms of processing, sumoylated.

The protein localises to the nucleus. The protein resides in the chromosome. It is found in the nucleolus. Functionally, component of the FACT complex, a general chromatin factor that acts to reorganize nucleosomes. The FACT complex is involved in multiple processes that require DNA as a template such as mRNA elongation, DNA replication and DNA repair. During transcription elongation the FACT complex acts as a histone chaperone that both destabilizes and restores nucleosomal structure. It facilitates the passage of RNA polymerase II and transcription by promoting the dissociation of one histone H2A-H2B dimer from the nucleosome, then subsequently promotes the reestablishment of the nucleosome following the passage of RNA polymerase II. The FACT complex is probably also involved in phosphorylation of 'Ser-392' of p53/TP53 via its association with CK2 (casein kinase II). Binds specifically to double-stranded DNA. Also acts as a transcriptional coactivator for p63/TP63. This is FACT complex subunit SSRP1 (Ssrp1) from Mus musculus (Mouse).